Here is an 881-residue protein sequence, read N- to C-terminus: DNA mismatch repair protein MutS (881 aa).

ATP is bound at residue 612-619 (GPNMAGKS).

Belongs to the DNA mismatch repair MutS family.

In terms of biological role, this protein is involved in the repair of mismatches in DNA. It is possible that it carries out the mismatch recognition step. This protein has a weak ATPase activity. The chain is DNA mismatch repair protein MutS from Clostridium tetani (strain Massachusetts / E88).